Consider the following 437-residue polypeptide: Putative permease IIC component (437 aa).

The 436-residue stretch at 2–437 folds into the PTS EIIC type-2 domain; it reads FDYILSLGGT…LFLRKRELSE (436 aa). The next 12 membrane-spanning stretches (helical) occupy residues 5-25, 35-55, 88-108, 134-154, 173-193, 215-235, 236-256, 302-322, 325-345, 354-374, 385-405, and 410-430; these read ILSL…GLIF, AGVT…MAID, ATAI…AMLV, LMTG…ALSL, ISIP…LDAI, GMVG…GLAA, GEGF…MVLF, TIAV…ILPG, VLPL…TVIH, ISGV…APYF, FAGE…GWSI, and SLGI…VLFL.

It localises to the cell inner membrane. The phosphoenolpyruvate-dependent sugar phosphotransferase system (PTS), a major carbohydrate active -transport system, catalyzes the phosphorylation of incoming sugar substrates concomitant with their translocation across the cell membrane. In Escherichia coli (strain K12), this protein is Putative permease IIC component (sgcC).